A 2226-amino-acid polypeptide reads, in one-letter code: MSCSQNETAAAKVLETQRAQESGSENEETDSITDQSSQSKSIKSATQFSVQRSDTDGLRMRISAIRPTLGVVATKKPPKSRKMSTQDTESGCSEAKNRAVSKKVKVKRKKLASSSGISKSDKVSKSKKSQISAFSSDSEDDLPLKVHQQRAPRVLLSAIIQAAQSASKPTLDIGISSSDNELPNLVQAAIKRVESDTEDTTVEGSFRKAAKDKNLPQYQSTLLQDFMEKTQMLGQTVNAKLAEEKVAKAKEETLVQTAVPRKRRGRPKKVVPTVPAPGNSGPAINESADSGVISTTSTTQSTTPSPKMQNENAVPTGSLPIASSSKPKIDMAYLDKRMYATERVLYPPPRSKRRQNNKKTACSSSNKEELQLDPLWREIDVNKKFRLRSMSVGAASGTGASTTICSKVLAAKSGYVSDYGSVRHQRSSHNHNSGYKSDASCKSRYSTKSCMSRRSRAKSCGYRSDCKESGKSGLRMRRKRRASMLLKSSADDTVEDQDILQLAGLSLGQSSEESNEYISKPSLKSLPTTSASKKYGEINRYVTTGQYFGRGGSLSATNPDNFISKMMNQRKETPAPSKSSCKIKSRRSSAASMCSSYVSGVSRMRRRHRRKSFSHNKSLNIDSKLLTEIEIITSTFNSRCRIQDDRLTGSSGKEKLLADANKLQATLAAPSPAQQLTLNGGGPASTLSKPLKRGLKKRKLSEPLVDFAMLSASASGTPNGSGSSNGNTKRRHKKSQSNDSSSPDDHKLPLKKRHYLLTPGERPPAEVAFANGKLNAEAWAAAAAAAKSTASTKSQAQFNARSVKSALTPKKRHLLEQPTSVSGAGSSASNSPLRIVVDNNSISGGKLLDISPSSLCSLKQQRRGGAAKQKVSAAKDLVQLQSPAGSYPPPGVFEPSVELEIQIPLSKLNESVITKAEVESPLLSALDIKEDTKKEVGQRVVETLLHKTGGNLLLKRKRKKINRTGFPTVRRKKRKVSVEQQTTAVIDEHEPEFDPDDEPLQSLRETRSSNNVNVQAAPNPPLDCERVPQAGEARETFVARTNQKAPRLSVVALERLQRPQTPARGRPRGRKPKNREQAEAAPQPPPKSEPEIRPAKKRGRQPKQPVLEEPPPTPPPQQKKNKMEPNIRLPDGIDPNTNFSCKIRLKRRKNLEAGTQPKKEKPVQPVTVEEIPPEIPVSQEEIDAEAEAKRLDSIPTEHDPLPASESHNPGPQDYASCSESSEDKASTTSLRKLSKVKKTYLVAGLFSNHYKQSLMPPPAKVNKKPGLEEQVGPASLLPPPPYCEKYLRRTEMDFELPYDIWWAYTNSKLPTRNVVPSWNYRKIRTNVYAESVRPNLAGFDHPTCNCKNQGEKSCLDNCLNRMVYTECSPSNCPAGEKCRNQKIQRHAVAPGVERFMTADKGWGVRTKLPIAKGTYILEYVGEVVTEKEFKQRMASIYLNDTHHYCLHLDGGLVIDGQRMGSDCRFVNHSCEPNCEMQKWSVNGLSRMVLFAKRAIEEGEELTYDYNFSLFNPSEGQPCRCNTPQCRGVIGGKSQRVKPLPAVEAKPSGEGLSGRNGRQRKQKAKKHAQRQAGKDISSAVAVAKLQPLSEKEKKLVRQFNTFLVRNFEKIRRCKAKRASDAAATASSPALGTTNGDIPGRRPSTPSSPSLAAQISALCSPRNIKTRGLTQAVHDPELEKMAKMAVVLRDICSAMETLKMSDLLTTVSSKKKKPIKTTLSGKLGSTAATSKVEFRSIQAQVEQGHYKTPQEFDDHMQQLFVEAKQQHGDDEGKEKALQSLKDSYEQQKIASYVQLVEILGDSESLQSFKPKEVLSSEEEPGKIAVKKSPGAKERDSPIVPLKVTPPPLLPIEASPDEDVIRCICGLYKDEGLMIQCSKCMVWQHTECTKADIDADNYQCERCEPREVDREIPLEEFTEEGHRYYLSLMRGDLQVRQGDAVYVLRDIPIKDESGKVLPTKKHTYETIGAIDYQECDIFRVEHLWKNELGKRFIFGHHFLRPHETFHEPSRRFYPNEVVRVSLYEVVPIELVIGRCWVLDRTTFCKGRPMECNDEDHCYICELRVDKTARFFSKAKANHPACTKSYAFRKFPEKIKISKSYAPHDVDPSLLKTRKQKTELDVGAGPTTMHKVSGRQEQHQAKMVGRKPRGISAPADATAVHVVTPVAPNKQMLKKRKSRLENVLITMKLKCLDAQTAQEQPIDLSYLLSGRGARQRKTQQSSSSSTANST.

Positions 1–145 (MSCSQNETAA…SDSEDDLPLK (145 aa)) are disordered. Over residues 32 to 52 (ITDQSSQSKSIKSATQFSVQR) the composition is skewed to polar residues. The span at 99-111 (AVSKKVKVKRKKL) shows a compositional bias: basic residues. A phosphoserine mark is found at Ser135, Ser136, and Ser138. 2 positions are modified to phosphothreonine: Thr200 and Thr201. The segment covering 260-269 (PRKRRGRPKK) has biased composition (basic residues). Disordered regions lie at residues 260 to 324 (PRKR…IASS), 343 to 367 (RVLY…SSNK), 673 to 695 (AQQL…KRGL), 711 to 749 (SASA…HKLP), and 811 to 832 (KRHL…SNSP). The a.T hook 1 DNA-binding region spans 261 to 273 (RKRRGRPKKVVPT). Positions 294–306 (STTSTTQSTTPSP) are enriched in low complexity. Over residues 307-324 (KMQNENAVPTGSLPIASS) the composition is skewed to polar residues. Residues 711–727 (SASASGTPNGSGSSNGN) are compositionally biased toward low complexity. Residues Ser740, Ser831, and Ser977 each carry the phosphoserine modification. Residues 820–831 (SVSGAGSSASNS) show a composition bias toward low complexity. 2 disordered regions span residues 980–1026 (QQTT…DCER) and 1049–1230 (SVVA…TTSL). Positions 989-999 (HEPEFDPDDEP) are enriched in acidic residues. 2 DNA-binding regions (a.T hook) span residues 1065–1077 (GRPR…NREQ) and 1095–1107 (AKKR…QPVL). Over residues 1108–1117 (EEPPPTPPPQ) the composition is skewed to pro residues. A compositionally biased stretch (basic and acidic residues) spans 1186–1200 (AEAKRLDSIPTEHDP). A compositionally biased stretch (polar residues) spans 1205–1219 (ESHNPGPQDYASCSE). The AWS domain maps to 1339 to 1387 (FDHPTCNCKNQGEKSCLDNCLNRMVYTECSPSNCPAGEKCRNQKIQRHA). The SET domain maps to 1390 to 1506 (PGVERFMTAD…EGEELTYDYN (117 aa)). In terms of domain architecture, Post-SET spans 1514–1530 (EGQPCRCNTPQCRGVIG). Disordered stretches follow at residues 1536 to 1575 (VKPL…GKDI) and 1616 to 1648 (RASD…SSPS). Over residues 1556–1568 (GRQRKQKAKKHAQ) the composition is skewed to basic residues. Composition is skewed to low complexity over residues 1619–1628 (DAAATASSPA) and 1639–1648 (RRPSTPSSPS). The Bromo domain maps to 1681-1789 (KMAVVLRDIC…DSYEQQKIAS (109 aa)). Positions 1808-1839 (PKEVLSSEEEPGKIAVKKSPGAKERDSPIVPL) are disordered. The PHD-type zinc finger occupies 1857–1903 (VIRCICGLYKDEGLMIQCSKCMVWQHTECTKADIDADNYQCERCEPR). Residues 1952 to 2072 (KVLPTKKHTY…KTARFFSKAK (121 aa)) form the BAH domain. The disordered stretch occupies residues 2205–2226 (SGRGARQRKTQQSSSSSTANST). A compositionally biased stretch (low complexity) spans 2214–2226 (TQQSSSSSTANST).

This sequence belongs to the class V-like SAM-binding methyltransferase superfamily. Histone-lysine methyltransferase family. SET2 subfamily. As to quaternary structure, component of a large multiprotein complex distinct from complexes containing ash2 or brm. Interacts (via SET domain) with trx (via SET domain). Interacts with nej/cbp. Expressed throughout development but is present at higher levels during the embryonic and pupal stages than during the larval stages. During the larval stages it accumulates primarily in imaginal disks.

The protein localises to the nucleus. It localises to the chromosome. The catalysed reaction is L-lysyl(4)-[histone H3] + 3 S-adenosyl-L-methionine = N(6),N(6),N(6)-trimethyl-L-lysyl(4)-[histone H3] + 3 S-adenosyl-L-homocysteine + 3 H(+). In terms of biological role, trithorax group (TrxG) protein that has histone methyltransferase activity. Specifically trimethylates 'Lys-4' of histone H3 (H3K4me3), a specific tag for epigenetic transcriptional activation. TrxG proteins are generally required to maintain the transcriptionally active state of homeotic genes throughout development. Does not act as a coactivator required for transcriptional activation, but specifically prevents inappropriate Polycomb Group (PcG) silencing of homeotic genes in cells in which they must stay transcriptionally active. The sequence is that of Histone-lysine N-methyltransferase ash1 (ash1) from Drosophila melanogaster (Fruit fly).